We begin with the raw amino-acid sequence, 597 residues long: Elongation factor 4 (597 aa).

The region spanning 2 to 184 (DHIRNFSIIA…SLIAKVPPPK (183 aa)) is the tr-type G domain. GTP-binding positions include 14 to 19 (DHGKST) and 131 to 134 (NKID).

The protein belongs to the TRAFAC class translation factor GTPase superfamily. Classic translation factor GTPase family. LepA subfamily.

It is found in the cell inner membrane. It catalyses the reaction GTP + H2O = GDP + phosphate + H(+). In terms of biological role, required for accurate and efficient protein synthesis under certain stress conditions. May act as a fidelity factor of the translation reaction, by catalyzing a one-codon backward translocation of tRNAs on improperly translocated ribosomes. Back-translocation proceeds from a post-translocation (POST) complex to a pre-translocation (PRE) complex, thus giving elongation factor G a second chance to translocate the tRNAs correctly. Binds to ribosomes in a GTP-dependent manner. The protein is Elongation factor 4 of Burkholderia ambifaria (strain MC40-6).